A 79-amino-acid chain; its full sequence is Small ribosomal subunit protein uS17 (79 aa).

Belongs to the universal ribosomal protein uS17 family. Part of the 30S ribosomal subunit.

Its function is as follows. One of the primary rRNA binding proteins, it binds specifically to the 5'-end of 16S ribosomal RNA. The sequence is that of Small ribosomal subunit protein uS17 from Rhizobium johnstonii (strain DSM 114642 / LMG 32736 / 3841) (Rhizobium leguminosarum bv. viciae).